Consider the following 310-residue polypeptide: Coproporphyrin III ferrochelatase (310 aa).

2 residues coordinate Fe(2+): His-184 and Glu-265.

Belongs to the ferrochelatase family.

Its subcellular location is the cytoplasm. The catalysed reaction is Fe-coproporphyrin III + 2 H(+) = coproporphyrin III + Fe(2+). The protein operates within porphyrin-containing compound metabolism; protoheme biosynthesis. Its function is as follows. Involved in coproporphyrin-dependent heme b biosynthesis. Catalyzes the insertion of ferrous iron into coproporphyrin III to form Fe-coproporphyrin III. This is Coproporphyrin III ferrochelatase from Limosilactobacillus reuteri (strain DSM 20016) (Lactobacillus reuteri).